The following is a 258-amino-acid chain: Ribosomal RNA small subunit methyltransferase A (258 aa).

Histidine 13, leucine 15, glycine 41, aspartate 63, aspartate 87, and asparagine 106 together coordinate S-adenosyl-L-methionine.

Belongs to the class I-like SAM-binding methyltransferase superfamily. rRNA adenine N(6)-methyltransferase family. RsmA subfamily.

It localises to the cytoplasm. It carries out the reaction adenosine(1518)/adenosine(1519) in 16S rRNA + 4 S-adenosyl-L-methionine = N(6)-dimethyladenosine(1518)/N(6)-dimethyladenosine(1519) in 16S rRNA + 4 S-adenosyl-L-homocysteine + 4 H(+). Functionally, specifically dimethylates two adjacent adenosines (A1518 and A1519) in the loop of a conserved hairpin near the 3'-end of 16S rRNA in the 30S particle. May play a critical role in biogenesis of 30S subunits. This is Ribosomal RNA small subunit methyltransferase A from Cytophaga hutchinsonii (strain ATCC 33406 / DSM 1761 / CIP 103989 / NBRC 15051 / NCIMB 9469 / D465).